A 500-amino-acid polypeptide reads, in one-letter code: NAD(P)H-quinone oxidoreductase chain 4, chloroplastic (500 aa).

Helical transmembrane passes span 4–24 (FPWL…IFFL), 35–55 (YTIC…CYHF), 87–107 (IGPI…AWPI), 113–130 (LFHF…GSFS), 134–154 (LLLF…LLCM), 167–187 (FILY…GVAL), 208–228 (VLEI…SPII), 242–262 (HYST…YGLI), 272–292 (AHSI…IYAA), 305–325 (IAYS…SLTD), 330–350 (GALL…FLAG), 386–406 (LALP…GIIT), 411–431 (LLIP…LTPI), and 462–482 (LFLS…PDFV).

The protein belongs to the complex I subunit 4 family.

The protein resides in the plastid. It is found in the chloroplast thylakoid membrane. The catalysed reaction is a plastoquinone + NADH + (n+1) H(+)(in) = a plastoquinol + NAD(+) + n H(+)(out). The enzyme catalyses a plastoquinone + NADPH + (n+1) H(+)(in) = a plastoquinol + NADP(+) + n H(+)(out). In Nicotiana tomentosiformis (Tobacco), this protein is NAD(P)H-quinone oxidoreductase chain 4, chloroplastic.